We begin with the raw amino-acid sequence, 189 residues long: UPF0149 protein VFMJ11_2207 (189 aa).

This sequence belongs to the UPF0149 family.

This chain is UPF0149 protein VFMJ11_2207, found in Aliivibrio fischeri (strain MJ11) (Vibrio fischeri).